Reading from the N-terminus, the 338-residue chain is D-erythrose-4-phosphate dehydrogenase (338 aa).

12–13 (RI) contacts NAD(+). Residues 154–156 (SCT), Arg200, 213–214 (TK), and Arg236 each bind substrate. The active-site Nucleophile is Cys155. Position 318 (Asn318) interacts with NAD(+).

The protein belongs to the glyceraldehyde-3-phosphate dehydrogenase family. Epd subfamily. Homotetramer.

It localises to the cytoplasm. It catalyses the reaction D-erythrose 4-phosphate + NAD(+) + H2O = 4-phospho-D-erythronate + NADH + 2 H(+). It functions in the pathway cofactor biosynthesis; pyridoxine 5'-phosphate biosynthesis; pyridoxine 5'-phosphate from D-erythrose 4-phosphate: step 1/5. Functionally, catalyzes the NAD-dependent conversion of D-erythrose 4-phosphate to 4-phosphoerythronate. This chain is D-erythrose-4-phosphate dehydrogenase, found in Pectobacterium atrosepticum (strain SCRI 1043 / ATCC BAA-672) (Erwinia carotovora subsp. atroseptica).